Reading from the N-terminus, the 398-residue chain is Heat-inducible transcription repressor HrcA (398 aa).

The protein belongs to the HrcA family.

Functionally, negative regulator of class I heat shock genes (grpE-dnaK-dnaJ and groELS operons). Prevents heat-shock induction of these operons. This is Heat-inducible transcription repressor HrcA from Chlamydia pneumoniae (Chlamydophila pneumoniae).